The primary structure comprises 302 residues: Aspartate carbamoyltransferase catalytic subunit (302 aa).

Carbamoyl phosphate-binding residues include Arg55 and Thr56. Lys83 serves as a coordination point for L-aspartate. Positions 105, 133, and 136 each coordinate carbamoyl phosphate. Residues Arg166 and Arg222 each coordinate L-aspartate. Carbamoyl phosphate contacts are provided by Gly262 and Pro263.

Belongs to the aspartate/ornithine carbamoyltransferase superfamily. ATCase family. Heterododecamer (2C3:3R2) of six catalytic PyrB chains organized as two trimers (C3), and six regulatory PyrI chains organized as three dimers (R2).

The enzyme catalyses carbamoyl phosphate + L-aspartate = N-carbamoyl-L-aspartate + phosphate + H(+). Its pathway is pyrimidine metabolism; UMP biosynthesis via de novo pathway; (S)-dihydroorotate from bicarbonate: step 2/3. Its function is as follows. Catalyzes the condensation of carbamoyl phosphate and aspartate to form carbamoyl aspartate and inorganic phosphate, the committed step in the de novo pyrimidine nucleotide biosynthesis pathway. The sequence is that of Aspartate carbamoyltransferase catalytic subunit from Solibacter usitatus (strain Ellin6076).